Reading from the N-terminus, the 172-residue chain is Protein YdeJ (172 aa).

Belongs to the CinA family.

Its function is as follows. Does not have nicotinamide-nucleotide (NMN) amidohydrolase activity. In Escherichia coli (strain K12), this protein is Protein YdeJ (ydeJ).